Consider the following 228-residue polypeptide: Protein crossbronx homolog (228 aa).

The region spanning 14-168 (LQEYKILAEY…VEQCVEDSQR (155 aa)) is the UBC core domain.

It belongs to the ubiquitin-conjugating enzyme family. FTS subfamily.

This is Protein crossbronx homolog from Anopheles gambiae (African malaria mosquito).